The chain runs to 315 residues: Deoxyribonuclease-1-like 1 (315 aa).

The first 29 residues, 1–29 (MDSSGGFQKHTCGHALLLLLLLLAGGAEA), serve as a signal peptide directing secretion. Catalysis depends on residues E108 and H159. C198 and C235 are disulfide-bonded. N-linked (GlcNAc...) asparagine glycosylation is present at N272.

The protein belongs to the DNase I family.

The protein resides in the endoplasmic reticulum. The protein is Deoxyribonuclease-1-like 1 (DNASE1L1) of Sus scrofa (Pig).